Consider the following 843-residue polypeptide: Probable inorganic carbon transporter subunit DabA 2 (843 aa).

Zn(2+) is bound by residues Cys-352, Asp-354, His-536, and Cys-551.

It belongs to the inorganic carbon transporter (TC 9.A.2) DabA family. Forms a complex with DabB. Zn(2+) is required as a cofactor.

Its subcellular location is the cell inner membrane. Part of an energy-coupled inorganic carbon pump. This Bradyrhizobium sp. (strain BTAi1 / ATCC BAA-1182) protein is Probable inorganic carbon transporter subunit DabA 2.